The chain runs to 389 residues: Chalcone synthase 2 (389 aa).

Residue Cys164 is part of the active site.

Belongs to the thiolase-like superfamily. Chalcone/stilbene synthases family.

The enzyme catalyses (E)-4-coumaroyl-CoA + 3 malonyl-CoA + 3 H(+) = 2',4,4',6'-tetrahydroxychalcone + 3 CO2 + 4 CoA. It participates in secondary metabolite biosynthesis; flavonoid biosynthesis. In terms of biological role, the primary product of this enzyme is 4,2',4',6'-tetrahydroxychalcone (also termed naringenin-chalcone or chalcone) which can under specific conditions spontaneously isomerize into naringenin. The sequence is that of Chalcone synthase 2 (CHS2) from Trifolium subterraneum (Subterranean clover).